Reading from the N-terminus, the 125-residue chain is Small ribosomal subunit protein uS13 (125 aa).

Residues 95-125 (GLPVNGQRTRTNARTRKGGKKTVANKKKVTK) form a disordered region. Over residues 105-125 (TNARTRKGGKKTVANKKKVTK) the composition is skewed to basic residues.

This sequence belongs to the universal ribosomal protein uS13 family. Part of the 30S ribosomal subunit. Forms a loose heterodimer with protein S19. Forms two bridges to the 50S subunit in the 70S ribosome.

Located at the top of the head of the 30S subunit, it contacts several helices of the 16S rRNA. In the 70S ribosome it contacts the 23S rRNA (bridge B1a) and protein L5 of the 50S subunit (bridge B1b), connecting the 2 subunits; these bridges are implicated in subunit movement. Contacts the tRNAs in the A and P-sites. This chain is Small ribosomal subunit protein uS13, found in Leptospira interrogans serogroup Icterohaemorrhagiae serovar copenhageni (strain Fiocruz L1-130).